A 638-amino-acid polypeptide reads, in one-letter code: Chaperone protein HtpG (638 aa).

The tract at residues 1–346 (MSQQETHGFQ…SNDLPLNVSR (346 aa)) is a; substrate-binding. The tract at residues 347–563 (EILQDNKVTT…EGEMSTQMIK (217 aa)) is b. Positions 564 to 638 (LMQAAGQDVP…MNQMLLASVK (75 aa)) are c.

This sequence belongs to the heat shock protein 90 family. As to quaternary structure, homodimer.

The protein resides in the cytoplasm. Molecular chaperone. Has ATPase activity. The polypeptide is Chaperone protein HtpG (Shewanella pealeana (strain ATCC 700345 / ANG-SQ1)).